A 369-amino-acid polypeptide reads, in one-letter code: Glutamate 5-kinase (369 aa).

Lys-9 contributes to the ATP binding site. Residues Ser-49, Asp-136, and Asn-148 each contribute to the substrate site. ATP contacts are provided by residues 168 to 169 (TD) and 210 to 216 (TGGMLTK). One can recognise a PUA domain in the interval 275–355 (RGGVYVDEGA…KGVFIHRDDW (81 aa)).

This sequence belongs to the glutamate 5-kinase family.

Its subcellular location is the cytoplasm. It catalyses the reaction L-glutamate + ATP = L-glutamyl 5-phosphate + ADP. The protein operates within amino-acid biosynthesis; L-proline biosynthesis; L-glutamate 5-semialdehyde from L-glutamate: step 1/2. Its function is as follows. Catalyzes the transfer of a phosphate group to glutamate to form L-glutamate 5-phosphate. This is Glutamate 5-kinase from Neisseria meningitidis serogroup A / serotype 4A (strain DSM 15465 / Z2491).